Reading from the N-terminus, the 284-residue chain is MVLMIVSGRSGSGKSVALRALEDMGFYCVDNLPVVLLPQLASTLADRNISAAVSIDVRNMPESPEVFEHAMTQLPDSFSPQLLFLDADRNTLIRRYSDTRRLHPLSAKNLSLESAIDEESDLLEPLRSRADLIIDTSEMSVHELAEMLRTRLLGKRERELTMVFESFGFKHGIPIDADYVFDVRFLPNPHWDPKLRPMTGLDKPVISFLDRHTEVHNFIYQTRSYLEQWLPMLETNNRSYLTVAIGCTGGKHRSVYVAEQLADYFRARGKNVQSRHRTLEKRKQ.

8–15 (GRSGSGKS) lines the ATP pocket. Residue 56–59 (DVRN) participates in GTP binding. The RNA-binding stretch occupies residues 266–284 (RARGKNVQSRHRTLEKRKQ).

It belongs to the RapZ-like family. RapZ subfamily. As to quaternary structure, homotrimer.

Its function is as follows. Modulates the synthesis of GlmS, by affecting the processing and stability of the regulatory small RNA GlmZ. When glucosamine-6-phosphate (GlcN6P) concentrations are high in the cell, RapZ binds GlmZ and targets it to cleavage by RNase E. Consequently, GlmZ is inactivated and unable to activate GlmS synthesis. Under low GlcN6P concentrations, RapZ is sequestered and inactivated by an other regulatory small RNA, GlmY, preventing GlmZ degradation and leading to synthesis of GlmS. In Yersinia pseudotuberculosis serotype O:1b (strain IP 31758), this protein is RNase adapter protein RapZ.